The sequence spans 109 residues: ATP-dependent Clp protease adapter protein ClpS (109 aa).

Residues 1 to 20 form a disordered region; that stretch reads MAERKQGGQGNGVGSSVVTE.

The protein belongs to the ClpS family. As to quaternary structure, binds to the N-terminal domain of the chaperone ClpA.

Functionally, involved in the modulation of the specificity of the ClpAP-mediated ATP-dependent protein degradation. This is ATP-dependent Clp protease adapter protein ClpS from Caulobacter vibrioides (strain NA1000 / CB15N) (Caulobacter crescentus).